Consider the following 1952-residue polypeptide: Protein ROS1A (1952 aa).

Disordered stretches follow at residues 72–157 (EVVG…CRSE), 693–778 (IIRP…ESTS), 1302–1334 (HGTSNVQGDNTVRTEQNGGENSQSGYSQQDDNV), and 1367–1398 (LIENSKDDKKTSPKVPVDGSKAKRPRVGAGKK). Composition is skewed to basic residues over residues 90 to 102 (PARKPKKKKHRPK) and 130 to 139 (GKRKYVRKKT). 2 stretches are compositionally biased toward basic and acidic residues: residues 709–720 (PRTDNHQVKVSE) and 727–747 (LPEKRKVGRPRKELKPGEKPK). Positions 769–778 (TNPLQNESTS) are enriched in polar residues. Residues 1388 to 1398 (AKRPRVGAGKK) are compositionally biased toward basic residues. Cysteine 1582, cysteine 1589, cysteine 1592, and cysteine 1598 together coordinate [4Fe-4S] cluster.

The protein belongs to the DNA glycosylase family. DEMETER subfamily. [4Fe-4S] cluster is required as a cofactor. Expressed in roots, leaf blades, leaf sheaths, apical and lateral shoot meristems, inflorescence meristems, lodicules, pollen grains, ovules and seeds. Expressed in vascular tissues of roots and leaves, pollen grains, pericarp, aleurone, and starchy endosperm.

It is found in the nucleus. Bifunctional DNA glycosylase/lyase, which excises 5-methylcytosine (5-meC) and 5-hydroxymethylcytosine (5-hmeC), leaving an apyrimidinic (AP) site that is subsequently incised by the lyase activity. DNA demethylase that is indispensable in both male and female gametophyte development. Involved in the regulation of DNA methylation in the promoters of RISBZ1/BZIP58 and DOF3/RPBF, two transcription factors that functions synergistically to positively regulate genes that are key players in the development of aleurone layers. Active DNA demethylation carried out by ROS1A in rice endosperms may restrict the number of aleurone cell layers. In Oryza sativa subsp. japonica (Rice), this protein is Protein ROS1A.